Consider the following 291-residue polypeptide: 33 kDa chaperonin (291 aa).

2 disulfides stabilise this stretch: Cys-237/Cys-239 and Cys-270/Cys-273.

Belongs to the HSP33 family. In terms of processing, under oxidizing conditions two disulfide bonds are formed involving the reactive cysteines. Under reducing conditions zinc is bound to the reactive cysteines and the protein is inactive.

It localises to the cytoplasm. Redox regulated molecular chaperone. Protects both thermally unfolding and oxidatively damaged proteins from irreversible aggregation. Plays an important role in the bacterial defense system toward oxidative stress. This Bacillus cereus (strain B4264) protein is 33 kDa chaperonin.